A 125-amino-acid chain; its full sequence is UPF0251 protein Dhaf_1981 (125 aa).

This sequence belongs to the UPF0251 family.

The protein is UPF0251 protein Dhaf_1981 of Desulfitobacterium hafniense (strain DSM 10664 / DCB-2).